Reading from the N-terminus, the 205-residue chain is uncharacterized protein (205 aa).

Over 1-63 the chain is Cytoplasmic; it reads MQRTRELESS…QHPKVAKFLK (63 aa). A helical transmembrane segment spans residues 64–84; it reads VQLVFDLISLFIFATHQLLLL. At 85–124 the chain is on the extracellular side; sequence EDGNFGKHYFKRKTKRCSKFSCSRCNANAHHPKWFKFKHS. The helical transmembrane segment at 125 to 145 threads the bilayer; it reads LLCLGTFCFGVYSLVKINKFF. The Cytoplasmic portion of the chain corresponds to 146 to 205; it reads KTDQTVDLNRLLELFFWQLNAILNMKLFAFYGDHLESHSAPLDVYEDSFANKSSSGGDEV.

It localises to the membrane. This is an uncharacterized protein from Saccharomyces cerevisiae (strain ATCC 204508 / S288c) (Baker's yeast).